Consider the following 323-residue polypeptide: MGSLSFASETKKELTGIEVKPCCLKAELSALIRMNGSISFSNRRLLLNIQTENAAIARRIYTLLKKGYDVVVELLVRKKMRLKKNNVYIVRVVEGTHELLSDLKIMEEGFSFVHAISPELVQKKCCKRSYLRGAFLAGGSVNNPETSSYHLEIFSLYREHNESLCELMNTSFHLHARTLERKKGFITYLKEAEKIAEFLSVIGAHQALLRFEDVRIVRDMRNSVNRLVNCETANLNKTIGAALRQVENIRYIDETIGLDQLPEKLREIAKLRIAYQDVTLKELGEMVSGGKISKSGINHRLRKLDEIAERLRAGQPIDFHKSL.

Residues 279-313 (TLKELGEMVSGGKISKSGINHRLRKLDEIAERLRA) constitute a DNA-binding region (H-T-H motif).

The protein belongs to the WhiA family.

Involved in cell division and chromosome segregation. This is Probable cell division protein WhiA from Anoxybacillus flavithermus (strain DSM 21510 / WK1).